A 308-amino-acid chain; its full sequence is Putative cathepsin L 3 (308 aa).

Positions 1–21 (MKQFLTAAIVTLLMTAGYYHL) are cleaved as a signal peptide. Residues 22-110 (QEDDTNDFER…GASLPEVQLE (89 aa)) constitute a propeptide, activation peptide. Cystine bridges form between Cys-129–Cys-170 and Cys-254–Cys-298. Active-site residues include His-261 and Asn-278.

This sequence belongs to the peptidase C1 family.

It is found in the secreted. The catalysed reaction is Specificity close to that of papain. As compared to cathepsin B, cathepsin L exhibits higher activity toward protein substrates, but has little activity on Z-Arg-Arg-NHMec, and no peptidyl-dipeptidase activity.. May be involved in extracellular digestion. The chain is Putative cathepsin L 3 from Paramecium tetraurelia.